A 255-amino-acid polypeptide reads, in one-letter code: Phosphoribosylaminoimidazole-succinocarboxamide synthase A (255 aa).

Belongs to the SAICAR synthetase family.

The catalysed reaction is 5-amino-1-(5-phospho-D-ribosyl)imidazole-4-carboxylate + L-aspartate + ATP = (2S)-2-[5-amino-1-(5-phospho-beta-D-ribosyl)imidazole-4-carboxamido]succinate + ADP + phosphate + 2 H(+). The protein operates within purine metabolism; IMP biosynthesis via de novo pathway; 5-amino-1-(5-phospho-D-ribosyl)imidazole-4-carboxamide from 5-amino-1-(5-phospho-D-ribosyl)imidazole-4-carboxylate: step 1/2. The chain is Phosphoribosylaminoimidazole-succinocarboxamide synthase A (purC1) from Bradyrhizobium diazoefficiens (strain JCM 10833 / BCRC 13528 / IAM 13628 / NBRC 14792 / USDA 110).